A 483-amino-acid chain; its full sequence is Regulatory protein ViaA (483 aa).

The protein belongs to the ViaA family. As to quaternary structure, homodimer. Interacts with RavA.

The protein localises to the cytoplasm. Component of the RavA-ViaA chaperone complex, which may act on the membrane to optimize the function of some of the respiratory chains. ViaA stimulates the ATPase activity of RavA. In Shigella flexneri, this protein is Regulatory protein ViaA.